The sequence spans 1410 residues: Slit homolog 1 protein (1410 aa).

An N-terminal signal peptide occupies residues 1–16 (MLICFIFILLIPESAT). One can recognise an LRRNT 1 domain in the interval 17–43 (CPAECVCVDRTVSCVGQQLTEVPQNIP). LRR repeat units lie at residues 22–42 (VCVDRTVSCVGQQLTEVPQNI), 43–66 (PNDTIRLDLQDNEITKIGPNDFSS), 67–90 (LMNLKALQLMDNQIVTIHNQSFSS), 91–114 (LVFLQKLRLSRNRIRHLPDNVFQN), 116–138 (LKLTHLDLSENDITVVSDAQLQG), 140–162 (EFLEVLNLDKNHIFCLENNVISS), 163–186 (WVSLEVLTLNGNRLTTFEEPSNAR), 219–242 (TVCATPLNLQGSSIEILQDKFMTC), 286–309 (PPSTTEIRLEQNQISSIPSHSFKN), 310–333 (LKNLTRLDLSKNIITEIQPKAFLG), 335–357 (HNLHTLVLYGNNITDLKSDTFEG), 358–381 (LGSLQLLLLNANQLTCIRRGTFDH), 383–405 (PKLSMLSLYDNDIKSISEVTFQN), 407–430 (TSLSTLHLAKNPLICDCNLQWLAQ), 442–465 (ARCEQPKRLRKKKFATLPPNKFKC), 489–510 (CDCYGTTVDCNKRGLNTIPTSI), 511–535 (PRFATQLLLSGNNISTVDLNSNIHV), 536–559 (LENLEVLDLSNNHITFINDKSFEK), 561–583 (SKLRELRLNDNKLHHFSSMVLDE), and 585–607 (SNLEILDLSGNNIQCFSSIFFNK). Residues 195 to 243 (NPWNCDCRLRWMRKWLEKAEGQNKTVCATPLNLQGSSIEILQDKFMTCS) enclose the LRRCT 1 domain. Residues 259 to 286 (ICPLPCTCTGTTVDCRDSGLTYVPTNLP) form the LRRNT 2 domain. The region spanning 417–466 (NPLICDCNLQWLAQINLQKNIETSGARCEQPKRLRKKKFATLPPNKFKCK) is the LRRCT 2 domain. In terms of domain architecture, LRRNT 3 spans 484 to 511 (ICPTQCDCYGTTVDCNKRGLNTIPTSIP). The LRRCT 3 domain occupies 619–671 (NDLLCDCRILPLMSWLRSNSSHSIDIPPCQQFQYSDNESDKQRCAAFPEETCS). Residues 677–703 (CPPKCSCLDRVVRCSNKNLTSFPSRIP) form the LRRNT 4 domain. 6 LRR repeats span residues 681–703 (CSCLDRVVRCSNKNLTSFPSRIP), 704–726 (FDTTELYLDANYINEIPAHDLNR), 727–750 (LYSLTKLDLSHNRLISLENNTFSN), 752–774 (TRLSTLIISYNKLRCLQPLAFNG), 775–798 (LNALRILSLHGNDISFLPQSAFSN), and 800–823 (TSITHIAVGSNSLYCDCNMAWFSK). The LRRCT 4 domain maps to 810 to 859 (NSLYCDCNMAWFSKWIKSKFIEAGIARCEYPNTVSNQLLLTAQPYQFTCD). 2 EGF-like domains span residues 871–906 (DLCLNSPCKNNAICETTSSRKYTCNCTPGFYGVHCE) and 908–945 (QIDACYGSPCLNNATCKVAQAGRFNCYCNKGFEGDYCE). 18 disulfide bridges follow: cysteine 873-cysteine 884, cysteine 878-cysteine 894, cysteine 896-cysteine 905, cysteine 912-cysteine 923, cysteine 917-cysteine 933, cysteine 935-cysteine 944, cysteine 951-cysteine 962, cysteine 956-cysteine 971, cysteine 973-cysteine 982, cysteine 989-cysteine 1002, cysteine 996-cysteine 1011, cysteine 1013-cysteine 1022, cysteine 1029-cysteine 1040, cysteine 1034-cysteine 1049, cysteine 1051-cysteine 1060, cysteine 1076-cysteine 1086, cysteine 1081-cysteine 1097, and cysteine 1099-cysteine 1108. In terms of domain architecture, EGF-like 1; calcium-binding spans 947-983 (NIDDCVNSKCENGGKCVDLINSYRCDCPMEYEGKHCE). The region spanning 985-1023 (KLEYCTKKLNPCENNGKCIPINGSYSCMCSPGFTGNNCE) is the EGF-like 3 domain. Residues 1025 to 1061 (NIDDCKNVECQNGGSCVDGILSYDCLCRPGYAGQYCE) form the EGF-like 2; calcium-binding domain. The region spanning 1072–1109 (KTDACQQSACGQGECVASQNSSDFTCKCHEGFSGPSCD) is the EGF-like 4 domain. In terms of domain architecture, Laminin G-like spans 1112–1285 (MSVGFKNPGA…LENVNTEQSC (174 aa)). The LRR 27 repeat unit spans residues 1197–1221 (TSERKCFLQIDKNPVQIVENSGKSD). 8 cysteine pairs are disulfide-bonded: cysteine 1259–cysteine 1285, cysteine 1292–cysteine 1302, cysteine 1297–cysteine 1314, cysteine 1316–cysteine 1325, cysteine 1332–cysteine 1368, cysteine 1346–cysteine 1382, cysteine 1357–cysteine 1398, and cysteine 1361–cysteine 1400. An EGF-like 5 domain is found at 1288–1326 (TVNFCAGIDCGNGKCTNNALSPKGYMCQCDSHFSGEHCD). Residues 1332-1406 (CDKQKFRRHH…QCQCEPTKSV (75 aa)) form the CTCK domain.

As to quaternary structure, interacts with eva-1.

Its subcellular location is the secreted. Functionally, functions as a ligand for sax-3 receptor during larval development. Acts via the sax-3/Robo receptor to direct ventral axon guidance and guidance at the midline during embryonic development. The sequence is that of Slit homolog 1 protein (slt-1) from Caenorhabditis elegans.